The chain runs to 68 residues: uncharacterized protein (68 aa).

This is an uncharacterized protein from Orgyia pseudotsugata (Douglas-fir tussock moth).